Here is a 60-residue protein sequence, read N- to C-terminus: Large ribosomal subunit protein uL30 (60 aa).

The protein belongs to the universal ribosomal protein uL30 family. As to quaternary structure, part of the 50S ribosomal subunit.

The polypeptide is Large ribosomal subunit protein uL30 (Amoebophilus asiaticus (strain 5a2)).